A 482-amino-acid polypeptide reads, in one-letter code: GTPase Obg (482 aa).

In terms of domain architecture, Obg spans 2 to 159 (PRFIDRVVVH…RELTLELKTV (158 aa)). The 182-residue stretch at 160-341 (ADVGLVGFPS…LIFALWDMVA (182 aa)) folds into the OBG-type G domain. GTP-binding positions include 166–173 (GFPSAGKS), 191–195 (FTTLA), 212–215 (DVPG), 292–295 (NKID), and 322–324 (STV). Positions 173 and 193 each coordinate Mg(2+). Residues 359–437 (PIPVDETAFS…IGDMTFDWEP (79 aa)) enclose the OCT domain. Positions 450–482 (RGTDVRLEQTDRVGADERKAARKARRQSDDGEE) are disordered. The span at 452 to 468 (TDVRLEQTDRVGADERK) shows a compositional bias: basic and acidic residues.

The protein belongs to the TRAFAC class OBG-HflX-like GTPase superfamily. OBG GTPase family. As to quaternary structure, monomer. Mg(2+) serves as cofactor.

It is found in the cytoplasm. Functionally, an essential GTPase which binds GTP, GDP and possibly (p)ppGpp with moderate affinity, with high nucleotide exchange rates and a fairly low GTP hydrolysis rate. Plays a role in control of the cell cycle, stress response, ribosome biogenesis and in those bacteria that undergo differentiation, in morphogenesis control. The protein is GTPase Obg of Mycolicibacterium gilvum (strain PYR-GCK) (Mycobacterium gilvum (strain PYR-GCK)).